The following is a 229-amino-acid chain: Protein ras-2 (229 aa).

15-22 (GDGGVGKT) serves as a coordination point for GTP. Residues 37 to 45 (YDPTIEDSY) carry the Effector region motif. 62–66 (DTAGQ) lines the GTP pocket. The tract at residues 109-132 (KESTSSPSAYPGSSPLAATNPSAP) is disordered. Residues 111–126 (STSSPSAYPGSSPLAA) show a composition bias toward low complexity. Residue 140–143 (NKSD) coordinates GTP. The segment at 188–229 (LRKQRQQGQSTPRALPPSGNSKSEKYSGTEKPKRPRGKCLII) is disordered. Over residues 209-219 (KSEKYSGTEKP) the composition is skewed to basic and acidic residues. A compositionally biased stretch (basic residues) spans 220 to 229 (KRPRGKCLII). The residue at position 226 (Cys-226) is a Cysteine methyl ester. The S-farnesyl cysteine moiety is linked to residue Cys-226. Positions 227 to 229 (LII) are cleaved as a propeptide — removed in mature form.

Belongs to the small GTPase superfamily. Ras family.

The protein resides in the cell membrane. The enzyme catalyses GTP + H2O = GDP + phosphate + H(+). In terms of biological role, ras proteins bind GDP/GTP and possess intrinsic GTPase activity. This Neurospora crassa (strain ATCC 24698 / 74-OR23-1A / CBS 708.71 / DSM 1257 / FGSC 987) protein is Protein ras-2 (ras-2).